Consider the following 591-residue polypeptide: DNA ligase (591 aa).

NAD(+) is bound by residues D38–D42, S87–L88, and E119. Residue K121 is the N6-AMP-lysine intermediate of the active site. Positions 142, 181, 298, and 322 each coordinate NAD(+). Zn(2+)-binding residues include C415, C418, C433, and C439.

It belongs to the NAD-dependent DNA ligase family. LigA subfamily. It depends on Mg(2+) as a cofactor. Mn(2+) serves as cofactor.

It catalyses the reaction NAD(+) + (deoxyribonucleotide)n-3'-hydroxyl + 5'-phospho-(deoxyribonucleotide)m = (deoxyribonucleotide)n+m + AMP + beta-nicotinamide D-nucleotide.. Its function is as follows. DNA ligase that catalyzes the formation of phosphodiester linkages between 5'-phosphoryl and 3'-hydroxyl groups in double-stranded DNA using NAD as a coenzyme and as the energy source for the reaction. It is essential for DNA replication and repair of damaged DNA. The protein is DNA ligase of Wigglesworthia glossinidia brevipalpis.